A 358-amino-acid polypeptide reads, in one-letter code: Serine/threonine-protein phosphatase 2A activator (358 aa).

Residues 1-20 are disordered; the sequence is MAEGERQPPPDSSEEAPPAT. Residue Ala-2 is modified to N-acetylalanine. ATP contacts are provided by Arg-183, Thr-188, and Gly-189. Residues Gly-243 and Asp-249 each contribute to the Mg(2+) site. ATP-binding residues include Pro-339, Gln-342, and His-343.

The protein belongs to the PTPA-type PPIase family. Associates with PP2A heterodimeric core enzyme PP2A(D), composed of a 36 kDa catalytic subunit (subunit C) and a 65 kDa constant regulatory subunit (PR65 or subunit A). Interacts with the catalytic subunit PPP2CA (via C-terminus). Interacts with PPP2CB. In terms of tissue distribution, widely expressed.

It is found in the cytoplasm. The protein resides in the nucleus. It catalyses the reaction [protein]-peptidylproline (omega=180) = [protein]-peptidylproline (omega=0). Its function is as follows. PPIases accelerate the folding of proteins. It catalyzes the cis-trans isomerization of proline imidic peptide bonds in oligopeptides. Acts as a regulatory subunit for serine/threonine-protein phosphatase 2A (PP2A). Modulates PP2A activity or substrate specificity, probably by inducing a conformational change in the catalytic subunit, a proposed direct target of the PPIase. Can reactivate inactive phosphatase PP2A-phosphatase methylesterase complexes (PP2A(i)) in presence of ATP and Mg(2+). Reversibly stimulates the variable phosphotyrosyl phosphatase activity of PP2A core heterodimer PP2A(D) in presence of ATP and Mg(2+) (in vitro). The phosphotyrosyl phosphatase activity is dependent of an ATPase activity of the PP2A(D):PPP2R4 complex. Is involved in apoptosis; the function appears to be independent from PP2A. The sequence is that of Serine/threonine-protein phosphatase 2A activator from Homo sapiens (Human).